The chain runs to 386 residues: MAYLFTSESVSEGHPDKIADQISDAILDAHLAEDRNSRVAAETLVTSGLVVLSGEITSQARVEPREIAREVIRDIGYTDPRIRFDAESCGVISSLHEQSGDISQGVDGGEEQGAGDQGLMFGYACRETEELMPMPITFSHRLVQELAHIRKETDKMPYLRPDSKSQVTIEYKEDRMTPRRVHTVVVSTQHDEGVPQKKIREDVRDILLPRALPTDLLDEDLILHVNPTGRFVTGGPHGDTGVTGRKIIVDTYGGKGAHGGGAFSGKDPSKVDRSATYAARHVAKNLVAAELCDEAEVQLAYAIGVAEPVSIDVSTNGTGVLPDTELCEMVREHFELSPSAIIDRLDLLKPRYQKTAAYGHFGRPTFPWEELTHVEALKRDAPAVAS.

Histidine 14 is a binding site for ATP. Aspartate 16 is a Mg(2+) binding site. Glutamate 42 serves as a coordination point for K(+). The L-methionine site is built by glutamate 55 and glutamine 98. The interval 98–108 (QSGDISQGVDG) is flexible loop. ATP-binding positions include 162 to 164 (DSK), 230 to 231 (RF), aspartate 239, 245 to 246 (RK), alanine 262, and lysine 266. Aspartate 239 is a binding site for L-methionine. Lysine 270 contacts L-methionine.

It belongs to the AdoMet synthase family. As to quaternary structure, homotetramer; dimer of dimers. The cofactor is Mg(2+). K(+) is required as a cofactor.

The protein resides in the cytoplasm. It catalyses the reaction L-methionine + ATP + H2O = S-adenosyl-L-methionine + phosphate + diphosphate. The protein operates within amino-acid biosynthesis; S-adenosyl-L-methionine biosynthesis; S-adenosyl-L-methionine from L-methionine: step 1/1. Its function is as follows. Catalyzes the formation of S-adenosylmethionine (AdoMet) from methionine and ATP. The overall synthetic reaction is composed of two sequential steps, AdoMet formation and the subsequent tripolyphosphate hydrolysis which occurs prior to release of AdoMet from the enzyme. The chain is S-adenosylmethionine synthase from Salinibacter ruber (strain DSM 13855 / M31).